We begin with the raw amino-acid sequence, 716 residues long: Ubiquitin thioesterase zranb1-B (716 aa).

2 RanBP2-type zinc fingers span residues 3–33 (DLGL…QRHN) and 82–111 (TSSK…QRQQ). Zn(2+) contacts are provided by C10, C13, C24, C27, C88, C91, C102, and C105. Positions 113-143 (SQQHSPLSPSETPQTSGSRPSPVTSDPCEEY) are disordered. A compositionally biased stretch (polar residues) spans 118-136 (PLSPSETPQTSGSRPSPVT). Residues 152-181 (HAQRWPCSACTYENWPKSLRCVVCDHPKPS) form a RanBP2-type 3 zinc finger. Residues C158, C161, C172, and C175 each contribute to the Zn(2+) site. The interval 178-228 (PKPSGSPETPQQDSEAESATSPSIVNEQERENVRTAGGGGGGSRGRLRKLS) is disordered. The segment covering 183–203 (SPETPQQDSEAESATSPSIVN) has biased composition (polar residues). ANK repeat units lie at residues 268–298 (RRSD…SGGD) and 321–348 (FTLV…QQTA). Residues 440–600 (LYALWNRTAG…RGHFSALVAM (161 aa)) form the OTU domain. C451 (nucleophile) is an active-site residue. H593 (proton acceptor) is an active-site residue.

Belongs to the peptidase C64 family.

Its subcellular location is the cytoplasm. The protein localises to the nucleus. It carries out the reaction Thiol-dependent hydrolysis of ester, thioester, amide, peptide and isopeptide bonds formed by the C-terminal Gly of ubiquitin (a 76-residue protein attached to proteins as an intracellular targeting signal).. In terms of biological role, ubiquitin thioesterase, which specifically hydrolyzes 'Lys-29'-linked and 'Lys-33'-linked diubiquitin. Also cleaves 'Lys-63'-linked chains, but with 40-fold less efficiency compared to 'Lys-29'-linked ones. Positive regulator of the Wnt signaling pathway that deubiquitinates apc protein, a negative regulator of Wnt-mediated transcription. Acts as a regulator of autophagy by mediating deubiquitination of pik3c3/vps34, thereby promoting autophagosome maturation. Plays a role in the regulation of cell morphology and cytoskeletal organization. Required in the stress fiber dynamics and cell migration. This is Ubiquitin thioesterase zranb1-B (zranb1b) from Danio rerio (Zebrafish).